We begin with the raw amino-acid sequence, 445 residues long: UPF0210 protein SPP_0289 (445 aa).

This sequence belongs to the UPF0210 family. Homodimer.

The protein is UPF0210 protein SPP_0289 of Streptococcus pneumoniae (strain P1031).